The primary structure comprises 813 residues: DNA ligase (813 aa).

NAD(+) contacts are provided by residues 41-45, 90-91, and E127; these read DAEYD and SI. The N6-AMP-lysine intermediate role is filled by K129. NAD(+) is bound by residues R150, E189, K307, and K331. C440, C443, C458, and C464 together coordinate Zn(2+). The BRCT domain maps to 729–813; that stretch reads AEEGALSGKT…LLQNPPGDSA (85 aa).

The protein belongs to the NAD-dependent DNA ligase family. LigA subfamily. Requires Mg(2+) as cofactor. Mn(2+) serves as cofactor.

The enzyme catalyses NAD(+) + (deoxyribonucleotide)n-3'-hydroxyl + 5'-phospho-(deoxyribonucleotide)m = (deoxyribonucleotide)n+m + AMP + beta-nicotinamide D-nucleotide.. Functionally, DNA ligase that catalyzes the formation of phosphodiester linkages between 5'-phosphoryl and 3'-hydroxyl groups in double-stranded DNA using NAD as a coenzyme and as the energy source for the reaction. It is essential for DNA replication and repair of damaged DNA. The chain is DNA ligase from Ralstonia nicotianae (strain ATCC BAA-1114 / GMI1000) (Ralstonia solanacearum).